A 508-amino-acid chain; its full sequence is Photosystem II CP47 reaction center protein (508 aa).

The next 6 helical transmembrane spans lie at Ser21 to Ser36, Ile101 to Trp115, Gly140 to Phe156, Ile203 to Ser218, Val237 to Val252, and Thr457 to Arg472.

The protein belongs to the PsbB/PsbC family. PsbB subfamily. In terms of assembly, PSII is composed of 1 copy each of membrane proteins PsbA, PsbB, PsbC, PsbD, PsbE, PsbF, PsbH, PsbI, PsbJ, PsbK, PsbL, PsbM, PsbT, PsbX, PsbY, PsbZ, Psb30/Ycf12, at least 3 peripheral proteins of the oxygen-evolving complex and a large number of cofactors. It forms dimeric complexes. The cofactor is Binds multiple chlorophylls. PSII binds additional chlorophylls, carotenoids and specific lipids..

Its subcellular location is the plastid. The protein localises to the chloroplast thylakoid membrane. In terms of biological role, one of the components of the core complex of photosystem II (PSII). It binds chlorophyll and helps catalyze the primary light-induced photochemical processes of PSII. PSII is a light-driven water:plastoquinone oxidoreductase, using light energy to abstract electrons from H(2)O, generating O(2) and a proton gradient subsequently used for ATP formation. The chain is Photosystem II CP47 reaction center protein from Oryza sativa subsp. indica (Rice).